The sequence spans 445 residues: Ribosomal protein uS12 methylthiotransferase RimO (445 aa).

An MTTase N-terminal domain is found at 4–119 (IKVALVSLGC…LLESIKVFLK (116 aa)). [4Fe-4S] cluster contacts are provided by cysteine 13, cysteine 48, cysteine 82, cysteine 156, cysteine 160, and cysteine 163. In terms of domain architecture, Radical SAM core spans 142–372 (TTPTYTAYVR…MILQQSISKD (231 aa)). The 67-residue stretch at 375–441 (KEKIGKIYEV…EYDLIGVVYN (67 aa)) folds into the TRAM domain.

This sequence belongs to the methylthiotransferase family. RimO subfamily. The cofactor is [4Fe-4S] cluster.

It localises to the cytoplasm. It carries out the reaction L-aspartate(89)-[ribosomal protein uS12]-hydrogen + (sulfur carrier)-SH + AH2 + 2 S-adenosyl-L-methionine = 3-methylsulfanyl-L-aspartate(89)-[ribosomal protein uS12]-hydrogen + (sulfur carrier)-H + 5'-deoxyadenosine + L-methionine + A + S-adenosyl-L-homocysteine + 2 H(+). Functionally, catalyzes the methylthiolation of an aspartic acid residue of ribosomal protein uS12. This Clostridium botulinum (strain Langeland / NCTC 10281 / Type F) protein is Ribosomal protein uS12 methylthiotransferase RimO.